A 513-amino-acid chain; its full sequence is Meiotic sister chromatid recombination protein 1 (513 aa).

Position 237 is a phosphothreonine (T237). Residue S243 is modified to Phosphoserine.

This chain is Meiotic sister chromatid recombination protein 1 (MSC1), found in Saccharomyces cerevisiae (strain ATCC 204508 / S288c) (Baker's yeast).